A 301-amino-acid polypeptide reads, in one-letter code: Putative F-box/LRR-repeat protein 19 (301 aa).

Positions P18–L66 constitute an F-box domain. LRR repeat units follow at residues I108–N133, C134–Y159, S160–L185, Y231–G256, and C257–D282.

The polypeptide is Putative F-box/LRR-repeat protein 19 (FBL19) (Arabidopsis thaliana (Mouse-ear cress)).